The sequence spans 568 residues: Vacuolar protein 8 (568 aa).

Gly-2 is lipidated: N-myristoyl glycine. Residues Cys-4, Cys-5, and Cys-7 are each lipidated (S-palmitoyl cysteine). ARM repeat units lie at residues 37 to 74 (DKDN…FAEI), 75 to 114 (TEKY…NLAV), 116 to 155 (NENK…NLAT), 157 to 196 (DDNK…NMTH), 198 to 237 (GENR…NIAV), 241 to 280 (NRRK…NLAS), 282 to 321 (TGYQ…NISI), 323 to 363 (PLNE…NLAA), and 407 to 446 (DNSK…NLCS).

Belongs to the beta-catenin family.

The protein resides in the vacuole membrane. Functions in both vacuole inheritance and protein targeting from the cytoplasm to vacuole. The protein is Vacuolar protein 8 (VAC8) of Eremothecium gossypii (strain ATCC 10895 / CBS 109.51 / FGSC 9923 / NRRL Y-1056) (Yeast).